The following is a 215-amino-acid chain: Cytochrome b6 (215 aa).

The helical transmembrane segment at 32–52 (IFYCLGGITLTCFLVQVATGF) threads the bilayer. Residue cysteine 35 coordinates heme c. Residues histidine 86 and histidine 100 each contribute to the heme b site. Helical transmembrane passes span 90 to 110 (ASMMVLMMILHVFRVYLTGGF), 116 to 136 (LTWVTGVILAVLTASFGVTGY), and 186 to 206 (LHTFVLPLLTAVFMLMHFSMI). The heme b site is built by histidine 187 and histidine 202.

The protein belongs to the cytochrome b family. PetB subfamily. In terms of assembly, the 4 large subunits of the cytochrome b6-f complex are cytochrome b6, subunit IV (17 kDa polypeptide, PetD), cytochrome f and the Rieske protein, while the 4 small subunits are PetG, PetL, PetM and PetN. The complex functions as a dimer. Heme b is required as a cofactor. The cofactor is heme c.

The protein resides in the plastid. It is found in the chloroplast thylakoid membrane. Functionally, component of the cytochrome b6-f complex, which mediates electron transfer between photosystem II (PSII) and photosystem I (PSI), cyclic electron flow around PSI, and state transitions. The polypeptide is Cytochrome b6 (Piper cenocladum (Ant piper)).